The following is a 353-amino-acid chain: Phosphoribosylformylglycinamidine cyclo-ligase (353 aa).

This sequence belongs to the AIR synthase family.

The protein localises to the cytoplasm. The enzyme catalyses 2-formamido-N(1)-(5-O-phospho-beta-D-ribosyl)acetamidine + ATP = 5-amino-1-(5-phospho-beta-D-ribosyl)imidazole + ADP + phosphate + H(+). It participates in purine metabolism; IMP biosynthesis via de novo pathway; 5-amino-1-(5-phospho-D-ribosyl)imidazole from N(2)-formyl-N(1)-(5-phospho-D-ribosyl)glycinamide: step 2/2. The chain is Phosphoribosylformylglycinamidine cyclo-ligase from Pseudomonas aeruginosa (strain LESB58).